Reading from the N-terminus, the 197-residue chain is ATP-dependent Clp protease proteolytic subunit 1 (197 aa).

His-126 is a catalytic residue.

The protein belongs to the peptidase S14 family. Fourteen ClpP subunits assemble into 2 heptameric rings which stack back to back to give a disk-like structure with a central cavity, resembling the structure of eukaryotic proteasomes.

It localises to the cytoplasm. It catalyses the reaction Hydrolysis of proteins to small peptides in the presence of ATP and magnesium. alpha-casein is the usual test substrate. In the absence of ATP, only oligopeptides shorter than five residues are hydrolyzed (such as succinyl-Leu-Tyr-|-NHMec, and Leu-Tyr-Leu-|-Tyr-Trp, in which cleavage of the -Tyr-|-Leu- and -Tyr-|-Trp bonds also occurs).. In terms of biological role, cleaves peptides in various proteins in a process that requires ATP hydrolysis. Has a chymotrypsin-like activity. Plays a major role in the degradation of misfolded proteins. The sequence is that of ATP-dependent Clp protease proteolytic subunit 1 from Nocardia farcinica (strain IFM 10152).